Reading from the N-terminus, the 92-residue chain is Small ribosomal subunit protein uS19c (92 aa).

Belongs to the universal ribosomal protein uS19 family.

The protein resides in the plastid. The protein localises to the chloroplast. Protein S19 forms a complex with S13 that binds strongly to the 16S ribosomal RNA. In Phaeodactylum tricornutum (strain CCAP 1055/1), this protein is Small ribosomal subunit protein uS19c.